A 632-amino-acid chain; its full sequence is Probable potassium transport system protein Kup 2 (632 aa).

The next 12 membrane-spanning stretches (helical) occupy residues 19 to 39 (FWGL…TSPL), 58 to 78 (MIVL…VTAK), 110 to 130 (MFLM…SMIT), 147 to 167 (PALE…LFAV), 178 to 198 (AFGP…IVHI), 216 to 236 (FLLS…LAVT), 257 to 277 (WLFF…ALVL), 290 to 310 (MVPE…TVIA), 347 to 367 (IYLP…VLLF), 377 to 397 (YGIA…VVIW), 404 to 424 (AAVA…FFSA), and 429 to 449 (LFEG…TIWT).

The protein belongs to the HAK/KUP transporter (TC 2.A.72) family.

Its subcellular location is the cell inner membrane. The enzyme catalyses K(+)(in) + H(+)(in) = K(+)(out) + H(+)(out). Functionally, transport of potassium into the cell. Likely operates as a K(+):H(+) symporter. This Bradyrhizobium sp. (strain BTAi1 / ATCC BAA-1182) protein is Probable potassium transport system protein Kup 2.